The sequence spans 431 residues: Enolase (431 aa).

(2R)-2-phosphoglycerate is bound at residue glutamine 163. Catalysis depends on glutamate 205, which acts as the Proton donor. Residues aspartate 242, glutamate 288, and aspartate 315 each contribute to the Mg(2+) site. (2R)-2-phosphoglycerate-binding residues include lysine 340, arginine 369, serine 370, and lysine 391. Lysine 340 serves as the catalytic Proton acceptor.

The protein belongs to the enolase family. The cofactor is Mg(2+).

The protein localises to the cytoplasm. Its subcellular location is the secreted. It is found in the cell surface. The enzyme catalyses (2R)-2-phosphoglycerate = phosphoenolpyruvate + H2O. It functions in the pathway carbohydrate degradation; glycolysis; pyruvate from D-glyceraldehyde 3-phosphate: step 4/5. Catalyzes the reversible conversion of 2-phosphoglycerate (2-PG) into phosphoenolpyruvate (PEP). It is essential for the degradation of carbohydrates via glycolysis. The protein is Enolase of Bacillus cereus (strain G9842).